Consider the following 123-residue polypeptide: Large ribosomal subunit protein bL19c (123 aa).

This sequence belongs to the bacterial ribosomal protein bL19 family.

The protein localises to the plastid. Its subcellular location is the chloroplast. The chain is Large ribosomal subunit protein bL19c (rpl19) from Porphyra purpurea (Red seaweed).